A 179-amino-acid chain; its full sequence is Ribosome maturation factor RimM (179 aa).

The PRC barrel domain maps to 102 to 173; the sequence is PEEYHYRDLI…ALHVQPPPGL (72 aa).

It belongs to the RimM family. As to quaternary structure, binds ribosomal protein uS19.

The protein localises to the cytoplasm. Functionally, an accessory protein needed during the final step in the assembly of 30S ribosomal subunit, possibly for assembly of the head region. Essential for efficient processing of 16S rRNA. May be needed both before and after RbfA during the maturation of 16S rRNA. It has affinity for free ribosomal 30S subunits but not for 70S ribosomes. The protein is Ribosome maturation factor RimM of Synechococcus sp. (strain JA-2-3B'a(2-13)) (Cyanobacteria bacterium Yellowstone B-Prime).